A 1400-amino-acid polypeptide reads, in one-letter code: DNA-directed RNA polymerase subunit beta' (1400 aa).

Residues Cys-71, Cys-73, Cys-86, and Cys-89 each contribute to the Zn(2+) site. Residues Asp-462, Asp-464, and Asp-466 each contribute to the Mg(2+) site. Zn(2+) is bound by residues Cys-810, Cys-884, Cys-891, and Cys-894. Positions 1377 to 1400 (REKQATIVPPAAPEAEPLALPPVE) are disordered.

The protein belongs to the RNA polymerase beta' chain family. As to quaternary structure, the RNAP catalytic core consists of 2 alpha, 1 beta, 1 beta' and 1 omega subunit. When a sigma factor is associated with the core the holoenzyme is formed, which can initiate transcription. The cofactor is Mg(2+). It depends on Zn(2+) as a cofactor.

It catalyses the reaction RNA(n) + a ribonucleoside 5'-triphosphate = RNA(n+1) + diphosphate. Its function is as follows. DNA-dependent RNA polymerase catalyzes the transcription of DNA into RNA using the four ribonucleoside triphosphates as substrates. The polypeptide is DNA-directed RNA polymerase subunit beta' (Rhodopseudomonas palustris (strain HaA2)).